The primary structure comprises 222 residues: Collectrin (222 aa).

The first 14 residues, 1–14 (MLWALFFLVTTIHA), serve as a signal peptide directing secretion. The Extracellular segment spans residues 15-141 (ELCRPDAENA…LAPPMDPSVP (127 aa)). Residues 21 to 222 (AENAFKVRLS…LTEDERLTPL (202 aa)) enclose the Collectrin-like domain. 2 N-linked (GlcNAc...) asparagine glycosylation sites follow: Asn76 and Asn93. Residues 142-162 (VWIIVFGVIFCIVTVAIALLV) form a helical membrane-spanning segment. Over 163–222 (LSGIRQRRRNKKGPPGVEDAEDKCENIITIENGIPCDPLDMKGGHINDGFLTEDERLTPL) the chain is Cytoplasmic. 2 positions are modified to phosphothreonine: Thr214 and Thr220.

It belongs to the CLTRN family. As to quaternary structure, monomer. Homodimer; dimerization prevents CLTRN cleavage by BACE2. Interacts with SLC6A18; this interaction regulates the trafficking of SLC6A18 to the cell membrane and its amino acid transporter activity. Interacts with SLC6A19; this interaction regulates the trafficking of SLC6A19 to the cell membrane and its amino acid transporter activity. Interacts with SNAPIN. Glycosylated. Glycosylation is required for plasma membrane localization and for its cleavage by BACE2. In terms of processing, proteolytically processed in pancreatic beta cells by BACE2 leading to the generation and extracellular release of soluble CLTRN, and a corresponding cell-associated C-terminal fragment which is later cleaved by gamma-secretase. This shedding process inactivates CLTRN. Three cleavage sites have been identified for BACE2, two clustered sites after Phe-116 and Leu-118 and a more membrane proximal site at Phe-125; the preferred BACE2 cleavage site seems to be between Phe-125 and Leu-126, Phe-116 and Leu-118 act as alternative sites. As to expression, kidney; collecting ducts. Pancreas; beta cells of islets.

The protein localises to the cell membrane. Plays an important role in amino acid transport by acting as binding partner of amino acid transporters SLC6A18 and SLC6A19, regulating their trafficking on the cell surface and their activity. May also play a role in trafficking of amino acid transporters SLC3A1 and SLC7A9 to the renal cortical cell membrane. Regulator of SNARE complex function. Stimulator of beta cell replication. This is Collectrin from Rattus norvegicus (Rat).